The sequence spans 314 residues: Polyamine aminopropyltransferase (314 aa).

Positions 13–249 (WSWFLEWLTP…SMWGFVVASD (237 aa)) constitute a PABS domain. S-methyl-5'-thioadenosine is bound at residue Gln-42. 2 residues coordinate spermidine: His-73 and Glu-97. S-methyl-5'-thioadenosine contacts are provided by residues Asp-117 and 149–150 (DA). Asp-168 (proton acceptor) is an active-site residue. Pro-177 is an S-methyl-5'-thioadenosine binding site.

It belongs to the spermidine/spermine synthase family. Homodimer or homotetramer.

It is found in the cytoplasm. It catalyses the reaction S-adenosyl 3-(methylsulfanyl)propylamine + putrescine = S-methyl-5'-thioadenosine + spermidine + H(+). The protein operates within amine and polyamine biosynthesis; spermidine biosynthesis; spermidine from putrescine: step 1/1. Functionally, catalyzes the irreversible transfer of a propylamine group from the amino donor S-adenosylmethioninamine (decarboxy-AdoMet) to putrescine (1,4-diaminobutane) to yield spermidine. The protein is Polyamine aminopropyltransferase of Aeropyrum pernix (strain ATCC 700893 / DSM 11879 / JCM 9820 / NBRC 100138 / K1).